Here is a 238-residue protein sequence, read N- to C-terminus: Ribonuclease PH (238 aa).

Phosphate contacts are provided by residues Arg-86 and 124 to 126 (GTR).

This sequence belongs to the RNase PH family. In terms of assembly, homohexameric ring arranged as a trimer of dimers.

The catalysed reaction is tRNA(n+1) + phosphate = tRNA(n) + a ribonucleoside 5'-diphosphate. Its function is as follows. Phosphorolytic 3'-5' exoribonuclease that plays an important role in tRNA 3'-end maturation. Removes nucleotide residues following the 3'-CCA terminus of tRNAs; can also add nucleotides to the ends of RNA molecules by using nucleoside diphosphates as substrates, but this may not be physiologically important. Probably plays a role in initiation of 16S rRNA degradation (leading to ribosome degradation) during starvation. The chain is Ribonuclease PH from Geobacter metallireducens (strain ATCC 53774 / DSM 7210 / GS-15).